Here is a 640-residue protein sequence, read N- to C-terminus: Threonine--tRNA ligase (640 aa).

One can recognise a TGS domain in the interval 1 to 63 (MSSVTVTLPD…SEDCEIEIVT (63 aa)). Positions 242–533 (DHRKLGREMD…LIEHYNGRFP (292 aa)) are catalytic. Zn(2+) contacts are provided by Cys-334, His-385, and His-510.

This sequence belongs to the class-II aminoacyl-tRNA synthetase family. In terms of assembly, homodimer. Requires Zn(2+) as cofactor.

It localises to the cytoplasm. The enzyme catalyses tRNA(Thr) + L-threonine + ATP = L-threonyl-tRNA(Thr) + AMP + diphosphate + H(+). Its function is as follows. Catalyzes the attachment of threonine to tRNA(Thr) in a two-step reaction: L-threonine is first activated by ATP to form Thr-AMP and then transferred to the acceptor end of tRNA(Thr). The polypeptide is Threonine--tRNA ligase (Halobacterium salinarum (strain ATCC 29341 / DSM 671 / R1)).